Consider the following 453-residue polypeptide: Alpha-galacturonidase (453 aa).

Position 11-72 (11-72) interacts with NAD(+); sequence IKIAYIGGGS…SQWEYKSVDS (62 aa). Position 151 (N151) interacts with substrate. C173 lines the Mn(2+) pocket. The active-site Proton donor is H174. Mn(2+) is bound at residue H209.

The protein belongs to the glycosyl hydrolase 4 family. As to quaternary structure, homotetramer. Requires NAD(+) as cofactor. It depends on Mn(2+) as a cofactor.

It catalyses the reaction [(1-&gt;4)-alpha-D-galacturonosyl](n) + H2O = alpha-D-galacturonate + [(1-&gt;4)-alpha-D-galacturonosyl](n-1). Functionally, alpha-galacturonidase able to catalyze the hydrolysis of the chromogenic substrate p-nitrophenyl-alpha-D-galacturonic acid (pNPalphaGalUA). It is probable that alpha-1,4-di-galacturonate (GalUA(2)) is the naturally occurring substrate. The polypeptide is Alpha-galacturonidase (Thermoanaerobacter italicus (strain DSM 9252 / Ab9)).